We begin with the raw amino-acid sequence, 144 residues long: Urease subunit beta (144 aa).

Belongs to the urease beta subunit family. In terms of assembly, heterotrimer of UreA (gamma), UreB (beta) and UreC (alpha) subunits. Three heterotrimers associate to form the active enzyme.

It is found in the cytoplasm. It carries out the reaction urea + 2 H2O + H(+) = hydrogencarbonate + 2 NH4(+). Its pathway is nitrogen metabolism; urea degradation; CO(2) and NH(3) from urea (urease route): step 1/1. The sequence is that of Urease subunit beta from Yersinia pseudotuberculosis serotype O:1b (strain IP 31758).